Consider the following 329-residue polypeptide: Putative 1-aminocyclopropane-1-carboxylate deaminase (329 aa).

Lysine 54 bears the N6-(pyridoxal phosphate)lysine mark.

It belongs to the ACC deaminase/D-cysteine desulfhydrase family. Requires pyridoxal 5'-phosphate as cofactor.

The catalysed reaction is 1-aminocyclopropane-1-carboxylate + H2O = 2-oxobutanoate + NH4(+). This is Putative 1-aminocyclopropane-1-carboxylate deaminase from Pyrococcus furiosus (strain ATCC 43587 / DSM 3638 / JCM 8422 / Vc1).